The primary structure comprises 312 residues: MKNHAISNKYLDISPEVTEALENNRPVVALESTIIAHGMPYPQNVKTALQVEQKIRENGAVPATIAVINGMMKAGLSHEEIAFLARKGDEITKVSRRDLPFVIAAGKNGATTVASTMIIAAMAGIRIFATGGIGGVHRGAEQTFDISADLQELAKTSVAVVCAGAKSILDLGLTTEYLETHGVPLIGYQTHALPAFFCRTSPFSVNIRLDSPEQIAQAMAVKWDTGLQGGLVVANPIPEPYAMPEAEISAAIEQAVRESIEQRVNGKACTPFLLARVSELTGGNSLSSNIQLVLNNAELAAKIACCYWERHM.

The active-site Proton donor is Glu31. Residues Lys93 and Val113 each contribute to the substrate site. Asp145 lines the Mn(2+) pocket. 147-149 (SAD) is a binding site for substrate. The active-site Nucleophile is the Lys166.

It belongs to the pseudouridine-5'-phosphate glycosidase family. As to quaternary structure, homotrimer. Mn(2+) is required as a cofactor.

The catalysed reaction is D-ribose 5-phosphate + uracil = psi-UMP + H2O. Catalyzes the reversible cleavage of pseudouridine 5'-phosphate (PsiMP) to ribose 5-phosphate and uracil. Functions biologically in the cleavage direction, as part of a pseudouridine degradation pathway. This chain is Pseudouridine-5'-phosphate glycosidase 2, found in Photorhabdus laumondii subsp. laumondii (strain DSM 15139 / CIP 105565 / TT01) (Photorhabdus luminescens subsp. laumondii).